Here is a 417-residue protein sequence, read N- to C-terminus: NADH-quinone oxidoreductase subunit D (417 aa).

It belongs to the complex I 49 kDa subunit family. NDH-1 is composed of 14 different subunits. Subunits NuoB, C, D, E, F, and G constitute the peripheral sector of the complex.

The protein localises to the cell inner membrane. It catalyses the reaction a quinone + NADH + 5 H(+)(in) = a quinol + NAD(+) + 4 H(+)(out). NDH-1 shuttles electrons from NADH, via FMN and iron-sulfur (Fe-S) centers, to quinones in the respiratory chain. The immediate electron acceptor for the enzyme in this species is believed to be ubiquinone. Couples the redox reaction to proton translocation (for every two electrons transferred, four hydrogen ions are translocated across the cytoplasmic membrane), and thus conserves the redox energy in a proton gradient. The polypeptide is NADH-quinone oxidoreductase subunit D (Francisella tularensis subsp. novicida (strain U112)).